Here is a 240-residue protein sequence, read N- to C-terminus: 2,3,4,5-tetrahydropyridine-2,6-dicarboxylate N-acetyltransferase (240 aa).

Belongs to the transferase hexapeptide repeat family. DapH subfamily.

It carries out the reaction (S)-2,3,4,5-tetrahydrodipicolinate + acetyl-CoA + H2O = L-2-acetamido-6-oxoheptanedioate + CoA. It participates in amino-acid biosynthesis; L-lysine biosynthesis via DAP pathway; LL-2,6-diaminopimelate from (S)-tetrahydrodipicolinate (acetylase route): step 1/3. Its function is as follows. Catalyzes the transfer of an acetyl group from acetyl-CoA to tetrahydrodipicolinate. The sequence is that of 2,3,4,5-tetrahydropyridine-2,6-dicarboxylate N-acetyltransferase from Bacillus anthracis (strain A0248).